Reading from the N-terminus, the 224-residue chain is Large ribosomal subunit protein uL4 (224 aa).

The segment at 52-109 is disordered; sequence AAARQGTHSTKTRGDVSGGGRKPYRQKGTGRARQGSTRAPQFTGGGVVHGPKPRDYSQ.

This sequence belongs to the universal ribosomal protein uL4 family. As to quaternary structure, part of the 50S ribosomal subunit.

Functionally, one of the primary rRNA binding proteins, this protein initially binds near the 5'-end of the 23S rRNA. It is important during the early stages of 50S assembly. It makes multiple contacts with different domains of the 23S rRNA in the assembled 50S subunit and ribosome. In terms of biological role, forms part of the polypeptide exit tunnel. This is Large ribosomal subunit protein uL4 from Mycobacterium marinum (strain ATCC BAA-535 / M).